The following is an 82-amino-acid chain: uncharacterized protein (82 aa).

The span at 55 to 64 shows a compositional bias: polar residues; that stretch reads DQNTAPSTPS. Positions 55–82 are disordered; that stretch reads DQNTAPSTPSKILPKRLPSQSNLNNNNN.

This is an uncharacterized protein from Dictyostelium discoideum (Social amoeba).